The sequence spans 277 residues: Radial spoke head protein 9 homolog (277 aa).

This sequence belongs to the flagellar radial spoke RSP9 family. As to quaternary structure, component of axonemal radial spoke complexes.

It localises to the cytoplasm. The protein localises to the cytoskeleton. It is found in the cilium axoneme. Its subcellular location is the flagellum axoneme. The protein resides in the cell projection. It localises to the kinocilium. Its function is as follows. Functions as part of axonemal radial spoke complexes that play an important part in the motility of sperm and cilia. Required for motility of olfactory and neural cilia and for the structural integrity of ciliary axonemes in both 9+0 and 9+2 motile cilia. Essential for both the radial spoke head assembly and the central pair microtubule stability in ependymal motile cilia. The polypeptide is Radial spoke head protein 9 homolog (rsph9) (Danio rerio (Zebrafish)).